Here is a 3898-residue protein sequence, read N- to C-terminus: Genome polyprotein (3898 aa).

Positions 1-168 (MELNHFELLY…TNCPLWVTSC (168 aa)) constitute a Peptidase C53 domain. Residues E22, H49, and C69 each act as for N-terminal protease activity in the active site. The disordered stretch occupies residues 32-54 (LFGNPSEVHPQSTLKLPHDRGRG). The tract at residues 112-138 (CEVTKRIGRVTGSDGKLYHIYVCVDGC) is zinc-binding TRASH domain. N-linked (GlcNAc...) asparagine; by host glycosylation is present at N157. 2 disordered regions span residues 170-206 (DDGASGSKDKKPDRMNKGKLKIAPREHEKDSKTKPPD) and 221-242 (KGKVKGKNTQDGLYHNKNKPPE). Basic and acidic residues-rich tracts occupy residues 176–185 (SKDKKPDRMN) and 192–204 (APREHEKDSKTKP). Residues N269, N274, N278, N293, and N332 are each glycosylated (N-linked (GlcNAc...) asparagine; by host). Disulfide bonds link C305–C349 and C335–C336. N-linked (GlcNAc...) asparagine; by host glycosylation is found at N362 and N367. 2 cysteine pairs are disulfide-bonded: C377–C422 and C381–C405. Residues N410, N425, N500, and N594 are each glycosylated (N-linked (GlcNAc...) asparagine; by host). Cysteines 693 and 737 form a disulfide. Residues N805, N810, N874, N918, N949, and N986 are each glycosylated (N-linked (GlcNAc...) asparagine; by host). The next 9 helical transmembrane spans lie at 1031–1051 (FVVLVVVALLGGRYVLWLIVT), 1070–1090 (VVLIGNLITHTDNEVVVYFLL), 1104–1124 (ILLLFHAMTNNPVKTITVALL), 1140–1164 (QRQPVTSFDIQLALAVVVVVVMLLA), 1189–1209 (FSTDLVIATVSAALLTWTYIS), 1217–1237 (WLQYLVSTVTGIFLIRVLKGI), 1247–1267 (LPSHRPLFYILVYLISTAVVT), 1281–1301 (VPTLLMVFTMWADILTLILIL), and 1360–1380 (TMLPLIKAILISCISNKWQLI). The region spanning 1441–1589 (KELIIKHKVR…DLEHLGWVLR (149 aa)) is the Peptidase C74 domain. Catalysis depends on for cysteine protease NS2 activity residues H1447, E1461, and C1512. Residues 1568 to 1588 (MLLVGNLGTEIGDLEHLGWVL) form a helical membrane-spanning segment. Residues 1590–1763 (GPAVCKKVTE…LPIFEASSGR (174 aa)) form the Peptidase S31 domain. Catalysis depends on charge relay system; for serine protease NS3 activity residues H1658 and D1695. N-linked (GlcNAc...) asparagine; by host glycosylation is present at N1713. S1752 serves as the catalytic Charge relay system; for serine protease NS3 activity. A Helicase ATP-binding domain is found at 1802–1960 (ITTMNRGEFR…QKHPIEEFIA (159 aa)). 1815 to 1822 (LATGAGKT) contacts ATP. The short motif at 1910-1913 (DEYH) is the DEAH box element. Residues 1978-2179 (GLKIPVEEMK…ELPMAVKNIM (202 aa)) form the Helicase C-terminal domain. 8 N-linked (GlcNAc...) asparagine; by host glycosylation sites follow: N2134, N2217, N2494, N2787, N2815, N2891, N3211, and N3316. T3500 and L3502 together coordinate GTP. In terms of domain architecture, RdRp catalytic spans 3519–3642 (PVAVSFDTKA…ITERALGEKF (124 aa)). An N-linked (GlcNAc...) asparagine; by host glycan is attached at N3689. Residue R3697 coordinates GTP. The N-linked (GlcNAc...) asparagine; by host glycan is linked to N3698. A GTP-binding site is contributed by K3705. The N-linked (GlcNAc...) asparagine; by host glycan is linked to N3794.

Belongs to the pestivirus polyprotein family. Interacts (via N-terminus) with host SP1; this interaction induces proteasomal degradation of SP1 with subsequent down-regulation of HDAC1 and ISG15 expression thereby counteracting the host innate immunity. Interacts (via C-terminus) with host IRF3. As to quaternary structure, interacts with host OS9. In terms of assembly, homodimer; disulfide-linked. Interacts with host RPSA. Homodimer; disulfide-linked. Heterodimer with E1; disulfide-linked. As to quaternary structure, homodimer; disulfide-linked. Heterodimer with E1; disulfide-linked. Interacts with host TRX2. Interacts with host receptor ADAM17 (via metalloproteinase domain); this interaction allows binding and probably entry of the virus into the host cell. Interacts with host ANXA2; this interaction allows binding and probably entry of the virus into the host cell. Interacts with host MERTK; this interaction allows binding and probably entry of the virus into the host cell. In terms of assembly, interacts with host TRAF6; this interaction inhibits host NF-kappa-B pathway. Interacts with NS5B; this interaction enhances RNA-dependent RNA polymerase activity. Interacts with protein NS4A. Interacts with host RAB5, this interaction facilitates the formation of NS4B-related complex. Interacts with host FTH1; this interaction plays a positive role in viral anti-apoptosis. As to quaternary structure, interacts with RNA-directed RNA polymerase. Interacts with host RSAD2; this interaction inhibits viral replication. In terms of assembly, interacts with NS5A; this interaction promotes viral replication. In terms of processing, heavily glycosylated. The viral RNA of pestiviruses is expressed as a single polyprotein which undergoes post-translational proteolytic processing resulting in the production of at least eleven individual proteins. The N-terminal protease cleaves itself from the nascent polyprotein autocatalytically and thereby generates the N-terminus of the adjacent viral capsid protein C. Post-translationally, cleavage between E2 and p7 is partial.

It is found in the host cytoplasm. The protein resides in the virion. The protein localises to the host cell membrane. It localises to the virion membrane. Its subcellular location is the host cell surface. It is found in the host membrane. The enzyme catalyses Leu is conserved at position P1 for all four cleavage sites. Alanine is found at position P1' of the NS4A-NS4B cleavage site, whereas serine is found at position P1' of the NS3-NS4A, NS4B-NS5A and NS5A-NS5B cleavage sites.. It catalyses the reaction RNA(n) + a ribonucleoside 5'-triphosphate = RNA(n+1) + diphosphate. The catalysed reaction is a ribonucleoside 5'-triphosphate + H2O = a ribonucleoside 5'-diphosphate + phosphate + H(+). It carries out the reaction ATP + H2O = ADP + phosphate + H(+). Its function is as follows. Leader cysteine autoprotease that cleaves itself from the nascent polyprotein during translation of the viral mRNA. Once released, plays a role in the inhibition of host innate immune response by interacting with host IRF3 and inducing its proteasomal degradation. Functionally, packages viral RNA to form a viral nucleocapsid and thereby protects viral RNA. Also plays a role in transcription regulation. Protects the incoming virus against IFN-induced effectors. Plays a role in viral entry. Interacts with host RPSA that acts as a cellular attachment receptor for the virus. Also possesses intrinsic ribonuclease (RNase) activity that can inhibit the production of type I interferon and assist in the development of persistent infections. Cleaves preferentially NpU bonds. Binds to heparan sulfate on the host cells for entry. In terms of biological role, plays a role in cell attachment and subsequent fusion of viral and cellular membranes. Therefore, mediates together with envelope glycoprotein E2 the viral entry. Its function is as follows. Plays a role in cell attachment and subsequent fusion of viral and cellular membranes. Therefore, mediates together with envelope glycoprotein E1 the viral entry. Binds to host ADAM17 receptor for entry. Binds to host ANXA2 for entry. Binds to host MERTK for entry. Functionally, plays an essential role in the virus replication cycle by acting as a viroporin. Forms ion conductive pores, which alters the cell permeability allowing the transport of ions and other small molecules. Autoprotease that associates with the host chaperone JIV and cleaves the NS2-3 protein between NS2 and NS3. Also plays a role in the formation of infectious particles. In terms of biological role, plays a role in the regulation of viral RNA replication. Its function is as follows. Multifunctional protein that contains an N-terminal protease and a C-terminal helicase, playing essential roles in viral polyprotein processing and viral genome replication. The chymotrypsin-like serine protease activity utilizes NS4A as an essential cofactor and catalyzes the cleavage of the polyprotein leading to the release of NS4A, NS4B, NS5A, and NS5B. Plays a role in the inhibition of host NF-kappa-B activation by interacting with and inhibiting host TRAF6. Interacts with NS5B to enhance RNA-dependent RNA polymerase activity. Functionally, acts as a cofactor for the NS3 protease activity. Induces a specific membrane alteration that serves as a scaffold for the virus replication complex. Antagonizes host cell apoptosis by interacting with host ferritin heavy chain. The ORF4 protein physically binds host FTH1/FHC, resulting in the reduction of FTH1 protein levels in host cells. Reduction of FTH1 concentration further inhibits the accumulation of reactive oxygen in host cells, leading to reduced apoptosis. In terms of biological role, regulates viral RNA replication by interacting with the 3'-untranslated region of viral RNA in a dose-dependent manner. At small concentrations promotes viral synthesis by interacting with the polymerase NS5B while at large concentrations, inhibits replication. Its function is as follows. Replicates the viral (+) and (-) genome. The sequence is that of Genome polyprotein from Classical swine fever virus (strain Alfort/Tuebingen) (CSFV).